Here is a 950-residue protein sequence, read N- to C-terminus: MTETPTAQPDRAADADTPQHRYTAELAGQIEGAWQQTWAVEGTFNVPNPVGELAPPDGTVPADKMFVQDMFPYPSGEGLHVGHPLGYIATDVYARYYRMTGRNVLHALGFDAFGLPAEQYAVQTGTHPRTRTEANIVNFRRQLGRLGLGHDTRRSFSTTDVDFYTWTQWIFLQIYNAWFDRDANRARPIAELIGEFESGVRTLDDGRPWSELSAGERADVVDSYRLVYRADSMVNWCPGLGTVLANEEVTADGRSDRGNFPVFRKRLRQWMMRITAYSDRLLEDLEVLDWPDKVKTMQRNWIGRSTGASVQFGTDAGDIEVFTTRPDTLFGATYLVLAPEHPLVEQLAAEQWPDDVDGRWTFGATTPREAVAAYRASIAAKSDLERQENKTKTGAFLGAYATNPANGQQVPIFIADYVLIGYGTGAIMAVPGHDQRDWEFAHEFGLPVVEVISGGDISEAAYAGDGLLVNSDYLDGLDVAAAKAAITDRLVADGRGRARVEYKLRDWLFARQRYWGEPFPIVYDSDGRPHPLPESALPVELPDVPDYSPVLFDPDDADSEPNPPLNKATDWVHVELDLGDGLQTYTRDTNVMPQWAGSSWYELRYTDPLNKEALCAKENEAYWMGPQPAEHGPDDPGGVDLYVGGVEHAVLHLLYSRFWHKVLYDLGHVSSREPYRRLVNQGYIQAFAYTDSRGSYVPAAEVVERDGKFWFEGAEVFQEFGKIGKSLKNSVSPDEICDNYGADTLRVYEMSMGPLEASRPWATKDVVGAHRFLQRVWRLVVDEQSGAVRVANHEALDTDTLRALHRTVAGVSEDYAALRNNTAAAKLIEYTNHLTKEGVTARAAIEPLVLMVAPLAPHLAEELWRRLGHDTSLAHGPFPVADPQYLVTDTVEYPVQVNGKVRSRITVDADAGKDTLEAAALADEKVQAFLNGATPKKVIVVPGRLVNLVV.

The 'HIGH' region motif lies at 72–83 (PYPSGEGLHVGH). Residues 722 to 726 (KIGKS) carry the 'KMSKS' region motif. Residue Lys725 participates in ATP binding.

It belongs to the class-I aminoacyl-tRNA synthetase family.

Its subcellular location is the cytoplasm. The catalysed reaction is tRNA(Leu) + L-leucine + ATP = L-leucyl-tRNA(Leu) + AMP + diphosphate. The sequence is that of Leucine--tRNA ligase from Mycobacterium sp. (strain KMS).